The sequence spans 1836 residues: Druantia protein DruE (1836 aa).

Positions 108–405 (SFLGEDASDL…FAQDLTGLSP (298 aa)) constitute a Helicase ATP-binding domain. 121 to 128 (TGTGSGKT) is an ATP binding site. A DEAH box motif is present at residues 347 to 350 (DEAH). Residues 1014–1199 (DCTALMPFAL…EVKVNNPKIA (186 aa)) form the Helicase C-terminal domain.

The protein localises to the cytoplasm. In terms of biological role, component of antiviral defense system Druantia type I, composed of DruA, DruB, DruC, DruD and DruE. Expression of Druantia in E.coli (strain MG1655) confers resistance to phage lambda, SECphi18, SECphi27 and T4. This protein is probably a helicase. This Escherichia coli (strain UMEA 4076-1) protein is Druantia protein DruE.